The sequence spans 423 residues: Serine--tRNA ligase (423 aa).

230 to 232 (TAE) is an L-serine binding site. 261–263 (RSE) contributes to the ATP binding site. Residue Glu-284 coordinates L-serine. Residue 348 to 351 (EISS) participates in ATP binding. An L-serine-binding site is contributed by Ser-383.

This sequence belongs to the class-II aminoacyl-tRNA synthetase family. Type-1 seryl-tRNA synthetase subfamily. Homodimer. The tRNA molecule binds across the dimer.

It localises to the cytoplasm. It carries out the reaction tRNA(Ser) + L-serine + ATP = L-seryl-tRNA(Ser) + AMP + diphosphate + H(+). It catalyses the reaction tRNA(Sec) + L-serine + ATP = L-seryl-tRNA(Sec) + AMP + diphosphate + H(+). It participates in aminoacyl-tRNA biosynthesis; selenocysteinyl-tRNA(Sec) biosynthesis; L-seryl-tRNA(Sec) from L-serine and tRNA(Sec): step 1/1. Catalyzes the attachment of serine to tRNA(Ser). Is also able to aminoacylate tRNA(Sec) with serine, to form the misacylated tRNA L-seryl-tRNA(Sec), which will be further converted into selenocysteinyl-tRNA(Sec). The chain is Serine--tRNA ligase from Levilactobacillus brevis (strain ATCC 367 / BCRC 12310 / CIP 105137 / JCM 1170 / LMG 11437 / NCIMB 947 / NCTC 947) (Lactobacillus brevis).